The chain runs to 119 residues: Beta-2-microglobulin (119 aa).

A signal peptide spans 1–20 (MARSVVVALLVLLSLSGLEA). The Ig-like C1-type domain maps to 25–114 (PKIQVYSRHP…VTFPTPKTVK (90 aa)). A disulfide bridge connects residues cysteine 45 and cysteine 100.

The protein belongs to the beta-2-microglobulin family. In terms of assembly, heterodimer of an alpha chain and a beta chain. Beta-2-microglobulin is the beta-chain of major histocompatibility complex class I molecules.

The protein localises to the secreted. Its function is as follows. Component of the class I major histocompatibility complex (MHC). Involved in the presentation of peptide antigens to the immune system. The sequence is that of Beta-2-microglobulin (B2M) from Lagothrix lagotricha (Brown woolly monkey).